Consider the following 244-residue polypeptide: Transcriptional activator protein CarR (244 aa).

Residues 162–227 enclose the HTH luxR-type domain; that stretch reads DNSRNALLSP…HAITKALELN (66 aa). The H-T-H motif DNA-binding region spans 186–205; that stretch reads YKEVSRILGISEVTVKFHIN.

The protein belongs to the autoinducer-regulated transcriptional regulatory protein family.

Functionally, functions as an OHLL responsive transcriptional regulator which acts in the control of the biosynthesis of carbapenem antibiotics. This chain is Transcriptional activator protein CarR (carR), found in Pectobacterium carotovorum subsp. carotovorum (Erwinia carotovora subsp. carotovora).